A 108-amino-acid chain; its full sequence is Nucleoid-associated protein Mmwyl1_2533 (108 aa).

Residues 1-22 (MFKGGMGNMMRQAQQMQENMQK) are disordered. Residues 11–22 (RQAQQMQENMQK) are compositionally biased toward polar residues.

It belongs to the YbaB/EbfC family. As to quaternary structure, homodimer.

The protein localises to the cytoplasm. It localises to the nucleoid. Its function is as follows. Binds to DNA and alters its conformation. May be involved in regulation of gene expression, nucleoid organization and DNA protection. This is Nucleoid-associated protein Mmwyl1_2533 from Marinomonas sp. (strain MWYL1).